The sequence spans 420 residues: Dachshund homolog dac-1 (420 aa).

The segment at P23 to N77 is disordered. Composition is skewed to low complexity over residues S24–N41 and S51–N77. The tract at residues K85–L171 is DACHbox-N. Positions N242–D258 are enriched in basic and acidic residues. Residues N242 to E321 are disordered. The segment covering L263–E273 has biased composition (polar residues). Low complexity predominate over residues G297–G317.

This sequence belongs to the DACH/dachshund family. As to expression, expressed in AFD, AWC, ASE and ASK neurons. Expressed in the alae.

It is found in the nucleus. Its function is as follows. Transcription factor. Plays a role in the thermotactic response. The chain is Dachshund homolog dac-1 from Caenorhabditis elegans.